Reading from the N-terminus, the 211-residue chain is Probable GTP-binding protein EngB (211 aa).

Residues 30–204 form the EngB-type G domain; the sequence is EGFEVAFAGR…YTVLAGWMEL (175 aa). GTP contacts are provided by residues 38-45, 64-68, 82-85, 149-152, and 182-185; these read GRSNAGKS, GRTQL, DLPG, TKAD, and LFSA. Mg(2+)-binding residues include S45 and T66.

This sequence belongs to the TRAFAC class TrmE-Era-EngA-EngB-Septin-like GTPase superfamily. EngB GTPase family. Mg(2+) serves as cofactor.

In terms of biological role, necessary for normal cell division and for the maintenance of normal septation. The protein is Probable GTP-binding protein EngB of Pseudomonas syringae pv. tomato (strain ATCC BAA-871 / DC3000).